Consider the following 253-residue polypeptide: Phosphate import ATP-binding protein PstB (253 aa).

Positions 7-248 (MHSKGLDFFY…PGNKQTEDYI (242 aa)) constitute an ABC transporter domain. 39–46 (GPSGCGKS) lines the ATP pocket.

This sequence belongs to the ABC transporter superfamily. Phosphate importer (TC 3.A.1.7) family. In terms of assembly, the complex is composed of two ATP-binding proteins (PstB), two transmembrane proteins (PstC and PstA) and a solute-binding protein (PstS).

It is found in the cell inner membrane. The catalysed reaction is phosphate(out) + ATP + H2O = ADP + 2 phosphate(in) + H(+). In terms of biological role, part of the ABC transporter complex PstSACB involved in phosphate import. Responsible for energy coupling to the transport system. In Oleidesulfovibrio alaskensis (strain ATCC BAA-1058 / DSM 17464 / G20) (Desulfovibrio alaskensis), this protein is Phosphate import ATP-binding protein PstB.